Consider the following 92-residue polypeptide: Small ribosomal subunit protein uS19 (92 aa).

The protein belongs to the universal ribosomal protein uS19 family.

In terms of biological role, protein S19 forms a complex with S13 that binds strongly to the 16S ribosomal RNA. The chain is Small ribosomal subunit protein uS19 from Methylobacterium sp. (strain 4-46).